A 547-amino-acid polypeptide reads, in one-letter code: ATP synthase subunit alpha (547 aa).

Residue 173–180 (GDRATGKT) coordinates ATP. Residues 526–547 (PEAEALADEDVEQEQIVRQKRG) are disordered. Acidic residues predominate over residues 528 to 538 (AEALADEDVEQ).

The protein belongs to the ATPase alpha/beta chains family. In terms of assembly, F-type ATPases have 2 components, CF(1) - the catalytic core - and CF(0) - the membrane proton channel. CF(1) has five subunits: alpha(3), beta(3), gamma(1), delta(1), epsilon(1). CF(0) has three main subunits: a(1), b(2) and c(9-12). The alpha and beta chains form an alternating ring which encloses part of the gamma chain. CF(1) is attached to CF(0) by a central stalk formed by the gamma and epsilon chains, while a peripheral stalk is formed by the delta and b chains.

It localises to the cell membrane. It catalyses the reaction ATP + H2O + 4 H(+)(in) = ADP + phosphate + 5 H(+)(out). Produces ATP from ADP in the presence of a proton gradient across the membrane. The alpha chain is a regulatory subunit. The chain is ATP synthase subunit alpha from Nocardioides sp. (strain ATCC BAA-499 / JS614).